The chain runs to 489 residues: Mitochondrial-processing peptidase subunit beta (489 aa).

Residues 1-45 (MAAAAVSRTLLPVAGRRLWGFTRRLPLRAAAAQPLYFGGDRLRST) constitute a mitochondrion transit peptide. A Zn(2+)-binding site is contributed by His101. The Proton acceptor role is filled by Glu104. Positions 105 and 181 each coordinate Zn(2+).

It belongs to the peptidase M16 family. As to quaternary structure, heterodimer of PMPCA (alpha) and PMPCB (beta) subunits, forming the mitochondrial processing protease (MPP) in which PMPCA is involved in substrate recognition and binding and PMPCB is the catalytic subunit. It depends on Zn(2+) as a cofactor.

It is found in the mitochondrion matrix. The enzyme catalyses Release of N-terminal transit peptides from precursor proteins imported into the mitochondrion, typically with Arg in position P2.. Its activity is regulated as follows. Binding to PMPCA is required for catalytic activity. In terms of biological role, catalytic subunit of the essential mitochondrial processing protease (MPP), which cleaves the mitochondrial sequence off newly imported precursors proteins. Preferentially, cleaves after an arginine at position P2. Required for PINK1 turnover by coupling PINK1 mitochondrial import and cleavage, which results in subsequent PINK1 proteolysis. The polypeptide is Mitochondrial-processing peptidase subunit beta (Pmpcb) (Rattus norvegicus (Rat)).